The following is a 184-amino-acid chain: Protein Syd (184 aa).

This sequence belongs to the Syd family.

The protein resides in the cell inner membrane. Functionally, interacts with the SecY protein in vivo. May bind preferentially to an uncomplexed state of SecY, thus functioning either as a chelating agent for excess SecY in the cell or as a regulatory factor that negatively controls the translocase function. This is Protein Syd from Edwardsiella ictaluri (strain 93-146).